Consider the following 752-residue polypeptide: Ribosomal RNA large subunit methyltransferase K/L (752 aa).

The THUMP domain occupies 53-164; the sequence is QMYKICLWTR…RDELHISIDL (112 aa).

The protein belongs to the methyltransferase superfamily. RlmKL family.

Its subcellular location is the cytoplasm. It catalyses the reaction guanosine(2445) in 23S rRNA + S-adenosyl-L-methionine = N(2)-methylguanosine(2445) in 23S rRNA + S-adenosyl-L-homocysteine + H(+). The enzyme catalyses guanosine(2069) in 23S rRNA + S-adenosyl-L-methionine = N(2)-methylguanosine(2069) in 23S rRNA + S-adenosyl-L-homocysteine + H(+). In terms of biological role, specifically methylates the guanine in position 2445 (m2G2445) and the guanine in position 2069 (m7G2069) of 23S rRNA. This chain is Ribosomal RNA large subunit methyltransferase K/L, found in Saccharophagus degradans (strain 2-40 / ATCC 43961 / DSM 17024).